Here is a 363-residue protein sequence, read N- to C-terminus: UDP-N-acetylglucosamine--N-acetylmuramyl-(pentapeptide) pyrophosphoryl-undecaprenol N-acetylglucosamine transferase (363 aa).

UDP-N-acetyl-alpha-D-glucosamine contacts are provided by residues 15–17 (TGG), asparagine 127, arginine 169, serine 197, isoleucine 251, 270–275 (ALTVSE), and glutamine 296.

This sequence belongs to the glycosyltransferase 28 family. MurG subfamily.

It localises to the cell inner membrane. The enzyme catalyses di-trans,octa-cis-undecaprenyl diphospho-N-acetyl-alpha-D-muramoyl-L-alanyl-D-glutamyl-meso-2,6-diaminopimeloyl-D-alanyl-D-alanine + UDP-N-acetyl-alpha-D-glucosamine = di-trans,octa-cis-undecaprenyl diphospho-[N-acetyl-alpha-D-glucosaminyl-(1-&gt;4)]-N-acetyl-alpha-D-muramoyl-L-alanyl-D-glutamyl-meso-2,6-diaminopimeloyl-D-alanyl-D-alanine + UDP + H(+). Its pathway is cell wall biogenesis; peptidoglycan biosynthesis. In terms of biological role, cell wall formation. Catalyzes the transfer of a GlcNAc subunit on undecaprenyl-pyrophosphoryl-MurNAc-pentapeptide (lipid intermediate I) to form undecaprenyl-pyrophosphoryl-MurNAc-(pentapeptide)GlcNAc (lipid intermediate II). This Dichelobacter nodosus (strain VCS1703A) protein is UDP-N-acetylglucosamine--N-acetylmuramyl-(pentapeptide) pyrophosphoryl-undecaprenol N-acetylglucosamine transferase.